The sequence spans 203 residues: Superoxide dismutase [Mn] (203 aa).

4 residues coordinate Mn(2+): His27, His81, Asp164, and His168.

The protein belongs to the iron/manganese superoxide dismutase family. Mn(2+) serves as cofactor.

The catalysed reaction is 2 superoxide + 2 H(+) = H2O2 + O2. Functionally, destroys superoxide anion radicals which are normally produced within the cells and which are toxic to biological systems. This Xanthomonas campestris pv. campestris (strain 8004) protein is Superoxide dismutase [Mn] (sodA).